The chain runs to 241 residues: MTGSIRSSTAGIDVRQLGSVDYQTAWQMQRDLADARVAGGPDTLLLLQHPAVYTAGRRTEPHERPGPVFAGAAGDEAIDVVDTDRGGKITWHGPGQLVGYPIIRLAQPLDVVNYVRRLEESLIKVSLDLGLETRRVEGRSGVWIPAGSGRPERKIAAIGVRVSRATTLHGFALNCDCDLAAFTAIVPCGISDAGVTSLSAELGRTVGVEEVRGAVADAVCNALDGALPVRDHPGARVASST.

The region spanning Ala38 to Leu227 is the BPL/LPL catalytic domain. Residues Arg85–His92, Ala157–Gly159, and Gly170–Ala172 each bind substrate. The Acyl-thioester intermediate role is filled by Cys188.

It belongs to the LipB family.

The protein resides in the cytoplasm. It carries out the reaction octanoyl-[ACP] + L-lysyl-[protein] = N(6)-octanoyl-L-lysyl-[protein] + holo-[ACP] + H(+). Its pathway is protein modification; protein lipoylation via endogenous pathway; protein N(6)-(lipoyl)lysine from octanoyl-[acyl-carrier-protein]: step 1/2. Functionally, catalyzes the transfer of endogenously produced octanoic acid from octanoyl-acyl-carrier-protein onto the lipoyl domains of lipoate-dependent enzymes. Lipoyl-ACP can also act as a substrate although octanoyl-ACP is likely to be the physiological substrate. The polypeptide is Octanoyltransferase (Mycobacterium ulcerans (strain Agy99)).